Here is a 338-residue protein sequence, read N- to C-terminus: Porphobilinogen deaminase (338 aa).

At cysteine 265 the chain carries S-(dipyrrolylmethanemethyl)cysteine.

Belongs to the HMBS family. Dipyrromethane is required as a cofactor.

It carries out the reaction 4 porphobilinogen + H2O = hydroxymethylbilane + 4 NH4(+). Its pathway is porphyrin-containing compound metabolism; protoporphyrin-IX biosynthesis; coproporphyrinogen-III from 5-aminolevulinate: step 2/4. In terms of biological role, tetrapolymerization of the monopyrrole PBG into the hydroxymethylbilane pre-uroporphyrinogen in several discrete steps. The sequence is that of Porphobilinogen deaminase (HEM3) from Yarrowia lipolytica (strain CLIB 122 / E 150) (Yeast).